The primary structure comprises 127 residues: Large ribosomal subunit protein eL18 (127 aa).

This sequence belongs to the eukaryotic ribosomal protein eL18 family.

In Methanopyrus kandleri (strain AV19 / DSM 6324 / JCM 9639 / NBRC 100938), this protein is Large ribosomal subunit protein eL18.